Reading from the N-terminus, the 493-residue chain is MWPQDPSRKEVLRFAVSCRILTLMLQALFNAIIPDHHAEAFSPPRLAPSGFVDQLVEGLLGGLSHWDAEHFLFIAEHGYLYEHNFAFFPGFPLALLVGTELLRPLRGLLSLRSCLLISVASLNFLFFMLAAVALHDLGCLVLHCPHQSFYAALLFCLSPANVFLAAGYSEALFALLTFSAMGQLERGRVWTSVLLFAFATGVRSNGLVSVGFLMHSQCQGFFSSLTMLNPLRQLFKLMASLFLSVFTLGLPFALFQYYAYTQFCLPGSARPIPEPLVQLAVDKGYRIAEGNEPPWCFWDVPLIYSYIQDVYWNVGFLKYYELKQVPNFLLAAPVAILVAWATWTYVTTHPWLCLTLGLQRSKNNKTLEKPDLGFLSPQVFVYVVHAAVLLLFGGLCMHVQVLTRFLGSSTPIMYWFPAHLLQDQEPLLRSLKTVPWKPLAEDSPPGQKVPRNPIMGLLYHWKTCSPVTRYILGYFLTYWLLGLLLHCNFLPWT.

Topologically, residues Met1–Arg13 are cytoplasmic. Residues Phe14–Pro34 traverse the membrane as a helical segment. Residues Asp35–His77 are Lumenal-facing. A helical membrane pass occupies residues Gly78–Gly98. Residues Thr99 to Ser113 are Cytoplasmic-facing. A helical membrane pass occupies residues Cys114–Leu134. The Lumenal segment spans residues His135–Asp136. A helical membrane pass occupies residues Leu137–Leu157. Residues Ser158–Asn161 lie on the Cytoplasmic side of the membrane. The helical transmembrane segment at Val162–Gly182 threads the bilayer. Over Gln183–Ser192 the chain is Lumenal. The helical transmembrane segment at Val193–Leu213 threads the bilayer. Residues Met214–Leu234 lie on the Cytoplasmic side of the membrane. The chain crosses the membrane as a helical span at residues Phe235–Phe255. The Lumenal segment spans residues Gln256–Asn327. A helical transmembrane segment spans residues Phe328 to Thr348. Residues His349–Gln378 are Cytoplasmic-facing. A helical transmembrane segment spans residues Val379–Val399. The Lumenal segment spans residues Gln400–Arg469. Residues Tyr470 to Leu490 form a helical membrane-spanning segment. Residues Pro491–Thr493 lie on the Cytoplasmic side of the membrane.

It belongs to the PIGV family. In terms of processing, not N-glycosylated.

Its subcellular location is the endoplasmic reticulum membrane. The protein operates within glycolipid biosynthesis; glycosylphosphatidylinositol-anchor biosynthesis. Functionally, alpha-1,6-mannosyltransferase that catalyzes the transfer of the second mannose, via an alpha-1,6 bond, from a dolichol-phosphate-mannose (Dol-P-Man) to the alpha-D-Man-(1-&gt;4)-alpha-D-GlcN-(1-&gt;6)-(1-radyl,2-acyl-sn-glycero-3-phospho)-2-acyl-inositol (also termed H2) intermediate to generate an alpha-D-Man-(1-&gt;6)-alpha-D-Man-(1-&gt;4)-alpha-D-GlcN-(1-&gt;6)-(1-radyl,2-acyl-sn-glycero-3-phospho)-2-acyl-inositol (also termed H3) and participates in the seventh step of the glycosylphosphatidylinositol-anchor biosynthesis. Also transfers the second mannose on a 2-PEtn-alpha-D-Man-(1-&gt;4)-alpha-D-GlcN-(1-&gt;6)-(1-radyl,2-acyl-sn-glycero-3-phospho)-2-acyl-inositol (also termed H5). In Homo sapiens (Human), this protein is GPI alpha-1,6-mannosyltransferase 2.